A 426-amino-acid polypeptide reads, in one-letter code: mRNA cap guanine-N(7) methyltransferase (426 aa).

Residues Ser138–Val421 enclose the mRNA cap 0 methyltransferase domain. Asn147–Asn148 lines the mRNA pocket. 6 residues coordinate S-adenosyl-L-methionine: Lys151, Ala169, Asp191, Asp220, Gln246, and Tyr251.

Belongs to the class I-like SAM-binding methyltransferase superfamily. mRNA cap 0 methyltransferase family.

The protein resides in the nucleus. It catalyses the reaction a 5'-end (5'-triphosphoguanosine)-ribonucleoside in mRNA + S-adenosyl-L-methionine = a 5'-end (N(7)-methyl 5'-triphosphoguanosine)-ribonucleoside in mRNA + S-adenosyl-L-homocysteine. Functionally, responsible for methylating the 5'-cap structure of mRNAs. In Kluyveromyces lactis (strain ATCC 8585 / CBS 2359 / DSM 70799 / NBRC 1267 / NRRL Y-1140 / WM37) (Yeast), this protein is mRNA cap guanine-N(7) methyltransferase (ABD1).